The sequence spans 205 residues: Holliday junction resolvase RecU (205 aa).

Residues 1-22 form a disordered region; it reads MAINYPAGTRRRTAQAKNTMRT. Residues Thr90, Asp92, Asp105, and Gln124 each contribute to the Mg(2+) site.

The protein belongs to the RecU family. Requires Mg(2+) as cofactor.

The protein localises to the cytoplasm. It catalyses the reaction Endonucleolytic cleavage at a junction such as a reciprocal single-stranded crossover between two homologous DNA duplexes (Holliday junction).. Endonuclease that resolves Holliday junction intermediates in genetic recombination. Cleaves mobile four-strand junctions by introducing symmetrical nicks in paired strands. Promotes annealing of linear ssDNA with homologous dsDNA. Required for DNA repair, homologous recombination and chromosome segregation. This chain is Holliday junction resolvase RecU, found in Leuconostoc citreum (strain KM20).